Consider the following 492-residue polypeptide: Ribose import ATP-binding protein RbsA (492 aa).

2 ABC transporter domains span residues 3-239 (IEMK…VGRS) and 249-492 (AEIR…TGGK). 35 to 42 (GENGAGKS) is an ATP binding site.

This sequence belongs to the ABC transporter superfamily. Ribose importer (TC 3.A.1.2.1) family. In terms of assembly, the complex is composed of an ATP-binding protein (RbsA), two transmembrane proteins (RbsC) and a solute-binding protein (RbsB).

The protein localises to the cell membrane. The enzyme catalyses D-ribose(out) + ATP + H2O = D-ribose(in) + ADP + phosphate + H(+). Its function is as follows. Part of the ABC transporter complex RbsABC involved in ribose import. Responsible for energy coupling to the transport system. This Lactococcus lactis subsp. cremoris (strain SK11) protein is Ribose import ATP-binding protein RbsA.